We begin with the raw amino-acid sequence, 242 residues long: Uridylate kinase (242 aa).

12–15 (KLSG) provides a ligand contact to ATP. Residues 20-25 (GDEGFG) form an involved in allosteric activation by GTP region. G54 provides a ligand contact to UMP. G55 and R59 together coordinate ATP. Residues D74 and 135 to 142 (TGSPFFTT) contribute to the UMP site. Positions 162, 168, and 171 each coordinate ATP.

The protein belongs to the UMP kinase family. Homohexamer.

The protein localises to the cytoplasm. The enzyme catalyses UMP + ATP = UDP + ADP. The protein operates within pyrimidine metabolism; CTP biosynthesis via de novo pathway; UDP from UMP (UMPK route): step 1/1. Its activity is regulated as follows. Allosterically activated by GTP. Inhibited by UTP. Functionally, catalyzes the reversible phosphorylation of UMP to UDP. The protein is Uridylate kinase of Pasteurella multocida (strain Pm70).